A 104-amino-acid chain; its full sequence is Large ribosomal subunit protein bL21 (104 aa).

The protein belongs to the bacterial ribosomal protein bL21 family. Part of the 50S ribosomal subunit. Contacts protein L20.

Functionally, this protein binds to 23S rRNA in the presence of protein L20. The sequence is that of Large ribosomal subunit protein bL21 from Clostridium tetani (strain Massachusetts / E88).